Consider the following 576-residue polypeptide: Acyl-CoA ligase sidI (576 aa).

Residues P3–P11 carry the PTS2-type peroxisomal targeting signal motif. D439, R454, and K553 together coordinate ATP.

It belongs to the ATP-dependent AMP-binding enzyme family.

The protein resides in the peroxisome. It participates in siderophore biosynthesis. Its function is as follows. Acyl-CoA ligase; part of the gene cluster that mediates the biosynthesis of at least 11 siderophores, including beauverichelin A, dimerumic acid (DA), Na-dimethyl coprogen (NADC), eleutherazine B, ferricrocin (FC), fusarinine A, fusarinine C (FsC), metachelin A, mevalonolactone, rhodotorulic acid (RA) and tenellin. This cocktail of siderophores for iron metabolism is essential for virulence, and more specifically for the fungal virulence in penetrating through the host cuticle. Siderophore synthesis is also involved in conidial germination under iron-deficient conditions. For biosynthesis of fusarinine C, the transacylase SIDF transfers anhydromevalonyl to N(5)-hydroxyornithine. The required anhydromevalonyl-CoA moiety is derived from mevalonate by CoA ligation and dehydration catalyzed by SIDI and sidH respectively. The polypeptide is Acyl-CoA ligase sidI (Beauveria bassiana (strain ARSEF 2860) (White muscardine disease fungus)).